The primary structure comprises 206 residues: Outer-membrane lipoprotein LolB (206 aa).

A signal peptide spans 1–18 (MKTFKFFTALFATAILTA). Residue C19 is the site of N-palmitoyl cysteine attachment. The S-diacylglycerol cysteine moiety is linked to residue C19.

The protein belongs to the LolB family. As to quaternary structure, monomer.

Its subcellular location is the cell outer membrane. Plays a critical role in the incorporation of lipoproteins in the outer membrane after they are released by the LolA protein. The chain is Outer-membrane lipoprotein LolB from Haemophilus influenzae (strain PittGG).